The chain runs to 187 residues: uncharacterized protein (187 aa).

The region spanning 6–66 (TDLAEQIFSA…QFAHRVFSMF (61 aa)) is the HTH tetR-type domain. The segment at residues 29–48 (SMLKLAKEANVAAGTIYLYF) is a DNA-binding region (H-T-H motif).

This is an uncharacterized protein from Haemophilus influenzae (strain ATCC 51907 / DSM 11121 / KW20 / Rd).